A 221-amino-acid chain; its full sequence is Cytidylate kinase (221 aa).

11–19 (GPCGAGKST) serves as a coordination point for ATP.

It belongs to the cytidylate kinase family. Type 1 subfamily.

The protein resides in the cytoplasm. It carries out the reaction CMP + ATP = CDP + ADP. The enzyme catalyses dCMP + ATP = dCDP + ADP. This is Cytidylate kinase from Mycoplasmopsis agalactiae (strain NCTC 10123 / CIP 59.7 / PG2) (Mycoplasma agalactiae).